Here is a 598-residue protein sequence, read N- to C-terminus: Pescadillo homolog (598 aa).

The disordered stretch occupies residues 296-317; the sequence is QAMKADSKDKDDNSNDEAPENV. Positions 345 to 439 constitute a BRCT domain; the sequence is PTATLFEDFV…ELLSANLYLP (95 aa). Disordered stretches follow at residues 452–501, 515–544, and 564–598; these read DALG…EDVE, GIAY…EDEE, and MKYS…VEKK. Over residues 463–485 the composition is skewed to acidic residues; that stretch reads ESEDESSDSSEESDSEIENEEED. Basic and acidic residues-rich tracts occupy residues 520 to 532, 570 to 579, and 586 to 598; these read KAKD…DVAS, QKEDKIEELK, and AKKE…VEKK. Residues 557–598 adopt a coiled-coil conformation; it reads QRKLYKKMKYSNQQKEDKIEELKKKKKQLAKKEKTLKKVEKK.

It belongs to the pescadillo family. Component of the NOP7 complex, composed of ERB1, NOP7 and YTM1. The complex is held together by ERB1, which interacts with NOP7 via its N-terminal domain and with YTM1 via a high-affinity interaction between the seven-bladed beta-propeller domains of the 2 proteins. The NOP7 complex associates with the 66S pre-ribosome.

It is found in the nucleus. The protein localises to the nucleolus. The protein resides in the nucleoplasm. Functionally, component of the NOP7 complex, which is required for maturation of the 25S and 5.8S ribosomal RNAs and formation of the 60S ribosome. The chain is Pescadillo homolog from Candida glabrata (strain ATCC 2001 / BCRC 20586 / JCM 3761 / NBRC 0622 / NRRL Y-65 / CBS 138) (Yeast).